The sequence spans 370 residues: ATP synthase gamma chain, chloroplastic (370 aa).

The transit peptide at 1–54 (MRSFCIAALLAVASAFTTQPTSFTVKTANVGERASGVFPEQSSAHRTRKATIVM) directs the protein to the chloroplast. The active site involves Cys145.

The protein belongs to the ATPase gamma chain family. As to quaternary structure, F-type ATPases have 2 components, CF(1) - the catalytic core - and CF(0) - the membrane proton channel. CF(1) has five subunits: alpha(3), beta(3), gamma(1), delta(1), epsilon(1). CF(0) has four main subunits: a, b, b' and c.

The protein localises to the plastid. It localises to the chloroplast thylakoid membrane. Its function is as follows. Produces ATP from ADP in the presence of a proton gradient across the membrane. The gamma chain is believed to be important in regulating ATPase activity and the flow of protons through the CF(0) complex. The protein is ATP synthase gamma chain, chloroplastic (ATPC) of Phaeodactylum tricornutum (Diatom).